The sequence spans 572 residues: Chaperonin CPN60-like 2, mitochondrial (572 aa).

The N-terminal 31 residues, 1-31 (MYRVLSKLSSSIGSSTSRKLVSGRIISSRNY), are a transit peptide targeting the mitochondrion.

The protein belongs to the chaperonin (HSP60) family.

The protein resides in the mitochondrion. Implicated in mitochondrial protein import and macromolecular assembly. May facilitate the correct folding of imported proteins. May also prevent misfolding and promote the refolding and proper assembly of unfolded polypeptides generated under stress conditions in the mitochondrial matrix. The polypeptide is Chaperonin CPN60-like 2, mitochondrial (Arabidopsis thaliana (Mouse-ear cress)).